A 374-amino-acid chain; its full sequence is Alginate lyase (374 aa).

The signal sequence occupies residues 1–23 (MHKTRLALSCLLGSLLLSGAVHA). Substrate contacts are provided by residues 62 to 63 (SK), 135 to 136 (HT), and Tyr-253.

This sequence belongs to the polysaccharide lyase 5 family.

It localises to the periplasm. The enzyme catalyses Eliminative cleavage of alginate to give oligosaccharides with 4-deoxy-alpha-L-erythro-hex-4-enuronosyl groups at their non-reducing ends and beta-D-mannuronate at their reducing end.. Catalyzes the depolymerization of alginate by cleaving the beta-1,4 glycosidic bond between two adjacent sugar residues via a beta-elimination mechanism. May serve to degrade mislocalized alginate that is trapped in the periplasmic space. This chain is Alginate lyase, found in Azotobacter vinelandii (strain DJ / ATCC BAA-1303).